Here is a 465-residue protein sequence, read N- to C-terminus: UDP-N-acetylmuramate--L-alanine ligase (465 aa).

112–118 is a binding site for ATP; the sequence is GTHGKTT.

It belongs to the MurCDEF family.

It is found in the cytoplasm. It carries out the reaction UDP-N-acetyl-alpha-D-muramate + L-alanine + ATP = UDP-N-acetyl-alpha-D-muramoyl-L-alanine + ADP + phosphate + H(+). It participates in cell wall biogenesis; peptidoglycan biosynthesis. Cell wall formation. This is UDP-N-acetylmuramate--L-alanine ligase from Burkholderia cenocepacia (strain HI2424).